The primary structure comprises 178 residues: uncharacterized protein (178 aa).

One can recognise an MSP domain in the interval 52 to 177 (HIAIEDRAHQ…RRLPASFLST (126 aa)).

This is an uncharacterized protein from Caenorhabditis elegans.